Consider the following 141-residue polypeptide: Short-chain diamines transporter (141 aa).

4 helical membrane passes run 16–36, 39–59, 76–96, and 103–123; these read VILL…PLEV, TLGI…NHFF, ILHA…MVAY, and WQAI…TFIF.

Belongs to the proteobacterial antimicrobial compound efflux (PACE) (TC 2.A.117) family.

Its subcellular location is the cell inner membrane. Functionally, mediates the efflux of short-chain diamines when energized by an electrochemical gradient. Involved in resistance to the synthetic biocide chlorhexidine, a widely used antiseptic and disinfectant in both hospital and community settings. Interacts directly with chlorhexidine and mediates its efflux via an energy-dependent mechanism. The chain is Short-chain diamines transporter from Acinetobacter baylyi (strain ATCC 33305 / BD413 / ADP1).